The primary structure comprises 616 residues: Chaperone protein HscA (616 aa).

The protein belongs to the heat shock protein 70 family.

Functionally, chaperone involved in the maturation of iron-sulfur cluster-containing proteins. Has a low intrinsic ATPase activity which is markedly stimulated by HscB. Involved in the maturation of IscU. The chain is Chaperone protein HscA from Shigella flexneri serotype 5b (strain 8401).